Consider the following 230-residue polypeptide: UPF0173 metal-dependent hydrolase Mbar_A3716 (230 aa).

This sequence belongs to the UPF0173 family.

In Methanosarcina barkeri (strain Fusaro / DSM 804), this protein is UPF0173 metal-dependent hydrolase Mbar_A3716.